Reading from the N-terminus, the 147-residue chain is D-aminoacyl-tRNA deacylase (147 aa).

Positions 136–137 match the Gly-cisPro motif, important for rejection of L-amino acids motif; the sequence is GP.

Belongs to the DTD family. In terms of assembly, homodimer.

Its subcellular location is the cytoplasm. It carries out the reaction glycyl-tRNA(Ala) + H2O = tRNA(Ala) + glycine + H(+). It catalyses the reaction a D-aminoacyl-tRNA + H2O = a tRNA + a D-alpha-amino acid + H(+). Its function is as follows. An aminoacyl-tRNA editing enzyme that deacylates mischarged D-aminoacyl-tRNAs. Also deacylates mischarged glycyl-tRNA(Ala), protecting cells against glycine mischarging by AlaRS. Acts via tRNA-based rather than protein-based catalysis; rejects L-amino acids rather than detecting D-amino acids in the active site. By recycling D-aminoacyl-tRNA to D-amino acids and free tRNA molecules, this enzyme counteracts the toxicity associated with the formation of D-aminoacyl-tRNA entities in vivo and helps enforce protein L-homochirality. The polypeptide is D-aminoacyl-tRNA deacylase (Streptococcus equi subsp. zooepidemicus (strain MGCS10565)).